The following is an 895-amino-acid chain: Androgen receptor (895 aa).

Residues 1–533 (MEVQLGLGRV…PIDYYFPPQK (533 aa)) are modulating. The interaction with ZNF318 stretch occupies residues 1–562 (MEVQLGLGRV…GSCKVFFKRA (562 aa)). 2 disordered regions span residues 33–150 (VIQN…LSLL) and 178–211 (QQQQQEAVSEGSSSGRAREASGAPTSSKDNYLEG). Composition is skewed to low complexity over residues 44–81 (AASAAPPGASLQQQQQQQQETSPRQQQQQQQGEDGSPQ) and 178–200 (QQQQQEAVSEGSSSGRAREASGA). Ser-65 is modified (phosphoserine; by CDK9). Position 79 is a phosphoserine (Ser-79). Residues 201 to 211 (PTSSKDNYLEG) are compositionally biased toward polar residues. Tyr-208 is modified (phosphotyrosine; by CSK). A Phosphoserine modification is found at Ser-241. Tyr-252 bears the Phosphotyrosine; by CSK and TNK2 mark. Tyr-292, Tyr-331, Tyr-342, and Tyr-347 each carry phosphotyrosine; by CSK. Phosphotyrosine; by CSK and TNK2 is present on Tyr-348. Residue Lys-371 forms a Glycyl lysine isopeptide (Lys-Gly) (interchain with G-Cter in SUMO) linkage. Phosphotyrosine; by CSK is present on Tyr-378. A Glycyl lysine isopeptide (Lys-Gly) (interchain with G-Cter in SUMO) cross-link involves residue Lys-496. 2 positions are modified to phosphotyrosine; by CSK: Tyr-510 and Tyr-527. Positions 527–894 (YYFPPQKTCL…GKVKPIYFHT (368 aa)) are interaction with LPXN. Residues 534–607 (TCLICGDEAS…AGMTLGARKL (74 aa)) constitute a DNA-binding region (nuclear receptor). NR C4-type zinc fingers lie at residues 535–555 (CLICGDEASGCHYGALTCGSC) and 571–595 (CASRNDCTIDKFRRKNCPSCRLRKC). The interaction with HIPK3 stretch occupies residues 547–637 (YGALTCGSCK…TEETAQKLTV (91 aa)). The tract at residues 567–894 (QKYLCASRND…GKVKPIYFHT (328 aa)) is interaction with CCAR1. The tract at residues 600-894 (MTLGARKLKK…GKVKPIYFHT (295 aa)) is interaction with KAT7. A Phosphoserine; by STK4/MST1 modification is found at Ser-626. Residues 644 to 875 (ECQPIFLNVL…DFPEMMAEII (232 aa)) form the NR LBD domain. 17beta-hydroxy-5alpha-androstan-3-one contacts are provided by Asn-681 and Arg-728. Glycyl lysine isopeptide (Lys-Gly) (interchain with G-Cter in ubiquitin) cross-links involve residues Lys-821 and Lys-823. Position 853 (Thr-853) interacts with 17beta-hydroxy-5alpha-androstan-3-one. Tyr-891 is modified (phosphotyrosine; by CSK).

The protein belongs to the nuclear hormone receptor family. NR3 subfamily. As to quaternary structure, binds DNA as a homodimer. Part of a ternary complex containing AR, EFCAB6/DJBP and PARK7. Interacts with HIPK3 and NR0B2 in the presence of androgen. The ligand binding domain interacts with KAT7/HBO1 in the presence of dihydrotestosterone. Interacts with EFCAB6/DJBP, PQBP1, RANBP9, RBAK, SPDEF, SRA1, TGFB1I1 and RREB1. Interacts with ZMIZ1/ZIMP10 and ZMIZ2/ZMIP7 which both enhance its transactivation activity. Interacts with SLC30A9 and RAD54L2/ARIP4. Interacts with MACROD1 (via macro domain). Interacts via the ligand-binding domain with LXXLL and FXXLF motifs from NCOA1, NCOA2, NCOA3 and MAGEA11. Interacts (via nuclear receptor DNA binding domain and nuclear receptor ligand binding domain) with NCOA4. The AR N-terminal poly-Gln region binds Ran resulting in enhancement of AR-mediated transactivation. Ran-binding decreases as the poly-Gln length increases. Interacts with HIP1 (via coiled coil domain). Interacts (via ligand-binding domain) with TRIM68. Interacts with TNK2. Interacts with USP26. Interacts with RNF6. Interacts (regulated by RNF6 probably through polyubiquitination) with RNF14; regulates AR transcriptional activity. Interacts with PRMT2 and TRIM24. Interacts with RACK1. Interacts with RANBP10; this interaction enhances dihydrotestosterone-induced AR transcriptional activity. Interacts with PRPF6 in a hormone-independent way; this interaction enhances dihydrotestosterone-induced AR transcriptional activity. Interacts with STK4/MST1. Interacts with ZIPK/DAPK3. Interacts with LPXN. Interacts with MAK. Part of a complex containing AR, MAK and NCOA3. Interacts with CRY1. Interacts with CCAR1 and GATA2. Interacts with ZNF318. Interacts with BUD31. Interacts with ARID4A. Interacts with ARID4B. Interacts (via NR LBD domain) with ZBTB7A; the interaction is direct and androgen-dependent. Interacts with NCOR1. Interacts with NCOR2. Interacts with CRY2 in a ligand-dependent manner. Post-translationally, phosphorylated in prostate cancer cells in response to several growth factors including EGF. Phosphorylation is induced by c-Src kinase (CSK). Tyr-510 is one of the major phosphorylation sites and an increase in phosphorylation and Src kinase activity is associated with prostate cancer progression. Phosphorylation by TNK2 enhances the DNA-binding and transcriptional activity. Phosphorylation at Ser-65 by CDK9 regulates AR promoter selectivity and cell growth. Sumoylated on Lys-371 (major) and Lys-496. Ubiquitinated. Deubiquitinated by USP26. 'Lys-6' and 'Lys-27'-linked polyubiquitination by RNF6 modulates AR transcriptional activity and specificity. In terms of processing, palmitoylated by ZDHHC7 and ZDHHC21. Palmitoylation is required for plasma membrane targeting and for rapid intracellular signaling via ERK and AKT kinases and cAMP generation.

It is found in the nucleus. The protein localises to the cytoplasm. Functionally, steroid hormone receptors are ligand-activated transcription factors that regulate eukaryotic gene expression and affect cellular proliferation and differentiation in target tissues. Transcription factor activity is modulated by bound coactivator and corepressor proteins like ZBTB7A that recruits NCOR1 and NCOR2 to the androgen response elements/ARE on target genes, negatively regulating androgen receptor signaling and androgen-induced cell proliferation. Transcription activation is also down-regulated by NR0B2. Activated, but not phosphorylated, by HIPK3 and ZIPK/DAPK3. The polypeptide is Androgen receptor (AR) (Macaca mulatta (Rhesus macaque)).